Consider the following 263-residue polypeptide: uncharacterized protein (263 aa).

The signal sequence occupies residues 1–22 (MEYLKRLALLISVIILTIFIMG). A lipid anchor (N-palmitoyl cysteine) is attached at Cys23. Cys23 carries the S-diacylglycerol cysteine lipid modification.

Belongs to the staphylococcal tandem lipoprotein family.

It localises to the cell membrane. This is an uncharacterized protein from Staphylococcus aureus (strain COL).